The primary structure comprises 289 residues: Heme oxygenase 1 (289 aa).

Positions 1-12 (MERPQPDSSMPQ) are enriched in polar residues. The interval 1–24 (MERPQPDSSMPQDLSEALKEATKE) is disordered. Residues 1 to 266 (MERPQPDSSM…KPQPSVLSQA (266 aa)) lie on the Cytoplasmic side of the membrane. 4 residues coordinate heme b: Lys19, His26, Tyr135, and Arg184. The interval 239-261 (RRAGSKVQDLAPTKASRGKPQPS) is disordered. At Ser243 the chain carries Phosphoserine. Residues 267–289 (PLLRWVLTLSFLVATVAVGLYAM) form a helical; Anchor for type IV membrane protein membrane-spanning segment.

This sequence belongs to the heme oxygenase family. Homodimer and higher order homooligomer. Oligomerization is crucial for its stability and function in the endoplasmic reticulum. Interacts with FLVCR2; this interaction is potentiated in the presence of heme. A soluble form arises by proteolytic removal of the membrane anchor.

Its subcellular location is the endoplasmic reticulum membrane. It carries out the reaction heme b + 3 reduced [NADPH--hemoprotein reductase] + 3 O2 = biliverdin IXalpha + CO + Fe(2+) + 3 oxidized [NADPH--hemoprotein reductase] + 3 H2O + H(+). With respect to regulation, inhibited by metalloporphyrins such as Sn-, Co-, Mn- and Zn-protoporphyrins. Its function is as follows. Catalyzes the oxidative cleavage of heme at the alpha-methene bridge carbon, released as carbon monoxide (CO), to generate biliverdin IXalpha, while releasing the central heme iron chelate as ferrous iron. Affords protection against programmed cell death and this cytoprotective effect relies on its ability to catabolize free heme and prevent it from sensitizing cells to undergo apoptosis. Functionally, catalyzes the oxidative cleavage of heme at the alpha-methene bridge carbon, released as carbon monoxide (CO), to generate biliverdin IXalpha, while releasing the central heme iron chelate as ferrous iron. The polypeptide is Heme oxygenase 1 (HMOX1) (Bos taurus (Bovine)).